The chain runs to 141 residues: Protein E6 (141 aa).

2 zinc fingers span residues C27–C64 and C101–C137.

This sequence belongs to the papillomaviridae E6 protein family. In terms of assembly, forms homodimers. Interacts with ubiquitin-protein ligase UBE3A/E6-AP; this interaction stimulates UBE3A ubiquitin activity. Interacts with host BAK1.

It is found in the host cytoplasm. The protein localises to the host nucleus. Plays a major role in the induction and maintenance of cellular transformation. E6 associates with host UBE3A/E6-AP ubiquitin-protein ligase and modulates its activity. Protects host keratinocytes from apoptosis by mediating the degradation of host BAK1. May also inhibit host immune response. This chain is Protein E6, found in Human papillomavirus 15.